A 338-amino-acid chain; its full sequence is Phenylalanine--tRNA ligase alpha subunit (338 aa).

Glu253 lines the Mg(2+) pocket.

Belongs to the class-II aminoacyl-tRNA synthetase family. Phe-tRNA synthetase alpha subunit type 1 subfamily. In terms of assembly, tetramer of two alpha and two beta subunits. Mg(2+) serves as cofactor.

The protein localises to the cytoplasm. It carries out the reaction tRNA(Phe) + L-phenylalanine + ATP = L-phenylalanyl-tRNA(Phe) + AMP + diphosphate + H(+). This chain is Phenylalanine--tRNA ligase alpha subunit, found in Syntrophus aciditrophicus (strain SB).